The primary structure comprises 400 residues: Putative lysosomal acid lipase/cholesteryl ester hydrolase (400 aa).

An N-terminal signal peptide occupies residues 1 to 17; it reads MWRLIIIAILFQGLVNS. Asn-34, Asn-129, and Asn-159 each carry an N-linked (GlcNAc...) asparagine glycan. In terms of domain architecture, AB hydrolase-1 spans 78 to 378; it reads PAVFLQHGLL…EWEHLDFIWG (301 aa). Ser-172 (charge relay system) is an active-site residue. Residue Asn-271 is glycosylated (N-linked (GlcNAc...) asparagine). His-372 acts as the Charge relay system in catalysis.

It belongs to the AB hydrolase superfamily. Lipase family. As to expression, expressed by the venom gland.

The protein localises to the secreted. The catalysed reaction is a sterol ester + H2O = a sterol + a fatty acid + H(+). In physiological conditions, is crucial for intracellular hydrolysis of cholesteryl esters and triglycerides that have been internalized via receptor-mediated endocytosis of lipoprotein particles. In venom, the biological contribution is unknown. This is Putative lysosomal acid lipase/cholesteryl ester hydrolase from Crotalus adamanteus (Eastern diamondback rattlesnake).